The chain runs to 366 residues: Growth/differentiation factor 3 (366 aa).

Positions methionine 1 to threonine 22 are cleaved as a signal peptide. Residues serine 23 to arginine 252 constitute a propeptide that is removed on maturation. 2 N-linked (GlcNAc...) asparagine glycosylation sites follow: asparagine 113 and asparagine 308. 3 cysteine pairs are disulfide-bonded: cysteine 266/cysteine 331, cysteine 295/cysteine 363, and cysteine 299/cysteine 365.

The protein belongs to the TGF-beta family. As to quaternary structure, homodimer. Heterodimer (Potential). But, in contrast to other members of this family, cannot be disulfide-linked. In terms of processing, synthesized as large precursor molecule that undergo proteolytic cleavage, releasing the pro-domain from the active, receptor binding, C-terminal region of the molecule. Primarily in adult bone marrow, spleen, thymus and adipose tissue.

It localises to the secreted. The protein resides in the cytoplasm. Functionally, growth factor involved in early embryonic development and adipose-tissue homeostasis. During embryogenesis controls formation of anterior visceral endoderm and mesoderm and the establishment of anterior-posterior identity through a receptor complex comprising the receptor ACVR1B and the coreceptor CRIPTO. Regulates adipose-tissue homeostasis and energy balance under nutrient overload in part by signaling through the receptor complex based on ACVR1C and CRIPTO. The chain is Growth/differentiation factor 3 (Gdf3) from Mus musculus (Mouse).